Reading from the N-terminus, the 365-residue chain is Cobalt-precorrin-5B C(1)-methyltransferase (365 aa).

This sequence belongs to the CbiD family.

The enzyme catalyses Co-precorrin-5B + S-adenosyl-L-methionine = Co-precorrin-6A + S-adenosyl-L-homocysteine. Its pathway is cofactor biosynthesis; adenosylcobalamin biosynthesis; cob(II)yrinate a,c-diamide from sirohydrochlorin (anaerobic route): step 6/10. Functionally, catalyzes the methylation of C-1 in cobalt-precorrin-5B to form cobalt-precorrin-6A. The sequence is that of Cobalt-precorrin-5B C(1)-methyltransferase from Clostridium perfringens (strain ATCC 13124 / DSM 756 / JCM 1290 / NCIMB 6125 / NCTC 8237 / Type A).